The chain runs to 215 residues: Fanconi anemia core complex-associated protein 24 (215 aa).

Belongs to the multisubunit FA complex composed of FANCA, FANCB, FANCC, FANCE, FANCF, FANCG, FANCL/PHF9, FANCM and FAAP24. Interacts with FANCM.

The protein localises to the nucleus. Its function is as follows. Plays a role in DNA repair through recruitment of the FA core complex to damaged DNA. Regulates FANCD2 monoubiquitination upon DNA damage. Induces chromosomal instability as well as hypersensitivity to DNA cross-linking agents, when repressed. Targets FANCM/FAAP24 complex to the DNA, preferentially to single strand DNA. The protein is Fanconi anemia core complex-associated protein 24 of Bos taurus (Bovine).